The primary structure comprises 366 residues: MDFLNASDQNLTSEELLNRMPSKILVSLTLSGLALMTTTINSLVIAAIIVTRKLHHPANYLICSLAVTDFLVAVLVMPFSIVYIVRESWIMGQVLCDIWLSVDIICCTCSILHLSAIALDRYRAITDAVEYARKRTPRHAGIMITIVWVISVFISMPPLFWRHQGTSRDDECVIKHDHIVSTIYSTFGAFYIPLVLILILYYKIYRAARTLYHKRQASRMIKEELNGQVFLESGEKSIKLVSTSYMLEKSLSDPSTDFDRIHSTVKSPRSELKHEKSWRRQKISGTRERKAATTLGLILGAFVICWLPFFVKELVVNVCEKCKISEEMSNFLAWLGYLNSLINPLIYTIFNEDFKKAFQKLVRCRY.

The Extracellular portion of the chain corresponds to Met-1–Ile-24. N-linked (GlcNAc...) asparagine glycans are attached at residues Asn-5 and Asn-10. The chain crosses the membrane as a helical span at residues Leu-25–Ile-49. The Cytoplasmic portion of the chain corresponds to Val-50–Asn-59. Residues Tyr-60–Ile-81 form a helical membrane-spanning segment. Over Val-82 to Cys-96 the chain is Extracellular. A disulfide bridge connects residues Cys-96 and Cys-172. The helical transmembrane segment at Asp-97–Leu-119 threads the bilayer. Positions 103 and 107 each coordinate serotonin. The DRY motif; important for ligand-induced conformation changes motif lies at Asp-120–Tyr-122. Residues Asp-120–His-139 are Cytoplasmic-facing. The helical transmembrane segment at Ala-140–Leu-159 threads the bilayer. The Extracellular segment spans residues Phe-160 to His-178. The chain crosses the membrane as a helical span at residues Ile-179–Tyr-202. Topologically, residues Lys-203–Ala-291 are cytoplasmic. Residues Ala-292–Val-315 traverse the membrane as a helical segment. Over Val-316–Glu-327 the chain is Extracellular. Residues Met-328–Phe-350 traverse the membrane as a helical segment. The short motif at Asn-343–Tyr-347 is the NPxxY motif; important for ligand-induced conformation changes and signaling element. At Asn-351–Tyr-366 the chain is on the cytoplasmic side.

This sequence belongs to the G-protein coupled receptor 1 family. In terms of tissue distribution, detected in hippocampus.

It is found in the cell membrane. G-protein coupled receptor for 5-hydroxytryptamine (serotonin). Also functions as a receptor for various alkaloids and psychoactive substances. Ligand binding causes a conformation change that triggers signaling via guanine nucleotide-binding proteins (G proteins) and modulates the activity of downstream effectors, such as adenylate cyclase. HTR1F is coupled to G(i)/G(o) G alpha proteins and mediates inhibitory neurotransmission by inhibiting adenylate cyclase activity. The sequence is that of 5-hydroxytryptamine receptor 1F (Htr1f) from Mus musculus (Mouse).